The following is a 238-amino-acid chain: Ribonuclease PH (238 aa).

Phosphate-binding positions include Arg86 and 124 to 126 (GTR).

This sequence belongs to the RNase PH family. As to quaternary structure, homohexameric ring arranged as a trimer of dimers.

It catalyses the reaction tRNA(n+1) + phosphate = tRNA(n) + a ribonucleoside 5'-diphosphate. Phosphorolytic 3'-5' exoribonuclease that plays an important role in tRNA 3'-end maturation. Removes nucleotide residues following the 3'-CCA terminus of tRNAs; can also add nucleotides to the ends of RNA molecules by using nucleoside diphosphates as substrates, but this may not be physiologically important. Probably plays a role in initiation of 16S rRNA degradation (leading to ribosome degradation) during starvation. This is Ribonuclease PH from Acinetobacter baylyi (strain ATCC 33305 / BD413 / ADP1).